Here is a 387-residue protein sequence, read N- to C-terminus: Proteinase R (387 aa).

A signal peptide spans 1–21; sequence MRLSILLGLLPLAPRPPAVDA. Residues 22-108 constitute a propeptide that is removed on maturation; sequence VEQRSEPAPL…IEQDAIVNIN (87 aa). The 66-residue stretch at 42–107 folds into the Inhibitor I9 domain; sequence KYIVKLKEGS…YIEQDAIVNI (66 aa). A Peptidase S8 domain is found at 115-387; the sequence is PWGLARISST…NLLAYNNYQG (273 aa). Thr-124 is a binding site for Ca(2+). 2 disulfides stabilise this stretch: Cys-142-Cys-231 and Cys-286-Cys-357. Active-site charge relay system residues include Asp-147 and His-177. A Ca(2+)-binding site is contributed by Asp-308. Ser-332 functions as the Charge relay system in the catalytic mechanism. Asp-368 serves as a coordination point for Ca(2+).

Belongs to the peptidase S8 family. The cofactor is Ca(2+).

Serine proteinase. The chain is Proteinase R (PROR) from Parengyodontium album (Tritirachium album).